We begin with the raw amino-acid sequence, 243 residues long: Uridylate kinase (243 aa).

An ATP-binding site is contributed by 18 to 21 (KLGG). A UMP-binding site is contributed by Gly59. ATP-binding residues include Gly60 and Arg64. Residues Asp79 and 140–147 (MGMPYFST) contribute to the UMP site. ATP is bound by residues Tyr173 and Asp176.

Belongs to the UMP kinase family. As to quaternary structure, homohexamer.

Its subcellular location is the cytoplasm. It carries out the reaction UMP + ATP = UDP + ADP. The protein operates within pyrimidine metabolism; CTP biosynthesis via de novo pathway; UDP from UMP (UMPK route): step 1/1. With respect to regulation, inhibited by UTP. Functionally, catalyzes the reversible phosphorylation of UMP to UDP. This Corynebacterium diphtheriae (strain ATCC 700971 / NCTC 13129 / Biotype gravis) protein is Uridylate kinase.